Consider the following 291-residue polypeptide: ATP synthase gamma chain (291 aa).

Belongs to the ATPase gamma chain family. As to quaternary structure, F-type ATPases have 2 components, CF(1) - the catalytic core - and CF(0) - the membrane proton channel. CF(1) has five subunits: alpha(3), beta(3), gamma(1), delta(1), epsilon(1). CF(0) has three main subunits: a, b and c.

The protein localises to the cell inner membrane. In terms of biological role, produces ATP from ADP in the presence of a proton gradient across the membrane. The gamma chain is believed to be important in regulating ATPase activity and the flow of protons through the CF(0) complex. The sequence is that of ATP synthase gamma chain from Cupriavidus metallidurans (strain ATCC 43123 / DSM 2839 / NBRC 102507 / CH34) (Ralstonia metallidurans).